Here is a 485-residue protein sequence, read N- to C-terminus: Glutamate--tRNA ligase (485 aa).

The short motif at 11 to 21 is the 'HIGH' region element; the sequence is PSPTGLLHIGN. A 'KMSKS' region motif is present at residues 255 to 259; the sequence is KLSKR. Position 258 (lysine 258) interacts with ATP.

The protein belongs to the class-I aminoacyl-tRNA synthetase family. Glutamate--tRNA ligase type 1 subfamily. Monomer.

The protein resides in the cytoplasm. It catalyses the reaction tRNA(Glu) + L-glutamate + ATP = L-glutamyl-tRNA(Glu) + AMP + diphosphate. Functionally, catalyzes the attachment of glutamate to tRNA(Glu) in a two-step reaction: glutamate is first activated by ATP to form Glu-AMP and then transferred to the acceptor end of tRNA(Glu). This chain is Glutamate--tRNA ligase, found in Streptococcus mutans serotype c (strain ATCC 700610 / UA159).